A 382-amino-acid polypeptide reads, in one-letter code: Pyrimidine monooxygenase RutA (382 aa).

Residues 68–69, Asn-134, Glu-143, 159–160, and Ser-209 each bind FMN; these read IK and RY.

It belongs to the NtaA/SnaA/DszA monooxygenase family. RutA subfamily.

The enzyme catalyses uracil + FMNH2 + NADH + O2 = (Z)-3-ureidoacrylate + FMN + NAD(+) + H2O + H(+). It catalyses the reaction thymine + FMNH2 + NADH + O2 = (Z)-2-methylureidoacrylate + FMN + NAD(+) + H2O + H(+). Catalyzes the pyrimidine ring opening between N-3 and C-4 by an unusual flavin hydroperoxide-catalyzed mechanism, adding oxygen atoms in the process to yield ureidoacrylate peracid, that immediately reacts with FMN forming ureidoacrylate and FMN-N(5)-oxide. The FMN-N(5)-oxide reacts spontaneously with NADH to produce FMN. Requires the flavin reductase RutF to regenerate FMN in vivo. This Escherichia coli (strain 55989 / EAEC) protein is Pyrimidine monooxygenase RutA.